The primary structure comprises 483 residues: ATP synthase subunit beta (483 aa).

Residue 169 to 176 (GGAGVGKT) coordinates ATP.

Belongs to the ATPase alpha/beta chains family. As to quaternary structure, F-type ATPases have 2 components, CF(1) - the catalytic core - and CF(0) - the membrane proton channel. CF(1) has five subunits: alpha(3), beta(3), gamma(1), delta(1), epsilon(1). CF(0) has three main subunits: a(1), b(2) and c(9-12). The alpha and beta chains form an alternating ring which encloses part of the gamma chain. CF(1) is attached to CF(0) by a central stalk formed by the gamma and epsilon chains, while a peripheral stalk is formed by the delta and b chains.

It is found in the cell membrane. The catalysed reaction is ATP + H2O + 4 H(+)(in) = ADP + phosphate + 5 H(+)(out). Its function is as follows. Produces ATP from ADP in the presence of a proton gradient across the membrane. The catalytic sites are hosted primarily by the beta subunits. This Rhodococcus opacus (strain B4) protein is ATP synthase subunit beta.